Consider the following 267-residue polypeptide: Glucosamine-6-phosphate deaminase (267 aa).

The active-site Proton acceptor; for enolization step is Asp-72. Asp-141 acts as the For ring-opening step in catalysis. The active-site Proton acceptor; for ring-opening step is the His-143. The For ring-opening step role is filled by Glu-148.

It belongs to the glucosamine/galactosamine-6-phosphate isomerase family. NagB subfamily. In terms of assembly, homohexamer.

The catalysed reaction is alpha-D-glucosamine 6-phosphate + H2O = beta-D-fructose 6-phosphate + NH4(+). The protein operates within amino-sugar metabolism; N-acetylneuraminate degradation; D-fructose 6-phosphate from N-acetylneuraminate: step 5/5. With respect to regulation, allosterically activated by N-acetylglucosamine 6-phosphate (GlcNAc6P). In terms of biological role, catalyzes the reversible isomerization-deamination of glucosamine 6-phosphate (GlcN6P) to form fructose 6-phosphate (Fru6P) and ammonium ion. This chain is Glucosamine-6-phosphate deaminase, found in Haemophilus ducreyi (strain 35000HP / ATCC 700724).